The chain runs to 501 residues: Ribose import ATP-binding protein RbsA (501 aa).

ABC transporter domains lie at 5–241 (LQLK…VGRK) and 252–495 (APGE…VGKL). ATP is bound at residue 37–44 (GENGAGKS).

It belongs to the ABC transporter superfamily. Ribose importer (TC 3.A.1.2.1) family. In terms of assembly, the complex is composed of an ATP-binding protein (RbsA), two transmembrane proteins (RbsC) and a solute-binding protein (RbsB).

The protein localises to the cell inner membrane. It carries out the reaction D-ribose(out) + ATP + H2O = D-ribose(in) + ADP + phosphate + H(+). Part of the ABC transporter complex RbsABC involved in ribose import. Responsible for energy coupling to the transport system. This is Ribose import ATP-binding protein RbsA from Salmonella paratyphi A (strain ATCC 9150 / SARB42).